Here is a 509-residue protein sequence, read N- to C-terminus: Cysteine--tRNA ligase (509 aa).

Zn(2+) is bound at residue cysteine 19. A 'HIGH' region motif is present at residues proline 21–histidine 31. Zn(2+)-binding residues include cysteine 213, histidine 238, and glutamate 242. The short motif at lysine 284–serine 288 is the 'KMSKS' region element. Position 287 (lysine 287) interacts with ATP.

It belongs to the class-I aminoacyl-tRNA synthetase family. Requires Zn(2+) as cofactor.

It catalyses the reaction tRNA(Cys) + L-cysteine + ATP = L-cysteinyl-tRNA(Cys) + AMP + diphosphate. This chain is Cysteine--tRNA ligase (CARS), found in Acanthamoeba polyphaga (Amoeba).